The chain runs to 23 residues: Testis ecdysiotropin peptide B (23 aa).

Its function is as follows. Stimulates synthesis of ecdysteroid in the testes of larvae and pupae. This chain is Testis ecdysiotropin peptide B, found in Lymantria dispar (Gypsy moth).